The primary structure comprises 775 residues: Serine/threonine-protein kinase-like protein CCR1 (775 aa).

An N-terminal signal peptide occupies residues 1–23 (METRCSLLFLSLILLYLPKPGSG). At 24 to 439 (FGSSGPIAAS…DKHWHQLQRL (416 aa)) the chain is on the extracellular side. Asparagine 57, asparagine 102, asparagine 167, asparagine 213, asparagine 220, asparagine 241, asparagine 261, asparagine 292, asparagine 328, and asparagine 360 each carry an N-linked (GlcNAc...) asparagine glycan. One copy of the TNFR-Cys repeat lies at 351–406 (PCNEKEFAFNASILNEPDLTSLCVRKELMVCSPCGSDCSHGFFLSSSCTANSDRIC). 3 disulfides stabilise this stretch: cysteine 352–cysteine 381, cysteine 384–cysteine 398, and cysteine 388–cysteine 406. Asparagine 414 carries N-linked (GlcNAc...) asparagine glycosylation. A helical membrane pass occupies residues 440–460 (VLIIGSCASALLIIIIGCCVV). At 461-775 (PRIVTSPNKE…EHVARDALIF (315 aa)) the chain is on the cytoplasmic side. Positions 520 to 770 (FKEFNELGRG…LANWLEHVAR (251 aa)) constitute a Protein kinase domain. ATP is bound by residues 526-534 (LGRGSYGFV) and lysine 548. Catalysis depends on aspartate 645, which acts as the Proton acceptor.

This sequence belongs to the protein kinase superfamily. Ser/Thr protein kinase family. In terms of assembly, homodimer. Expressed in roots, leaves, shoot apical meristems (SAM), and floral buds.

It localises to the membrane. It catalyses the reaction L-seryl-[protein] + ATP = O-phospho-L-seryl-[protein] + ADP + H(+). The catalysed reaction is L-threonyl-[protein] + ATP = O-phospho-L-threonyl-[protein] + ADP + H(+). Serine/threonine-protein kinase with low activity. The polypeptide is Serine/threonine-protein kinase-like protein CCR1 (CCR1) (Arabidopsis thaliana (Mouse-ear cress)).